A 349-amino-acid chain; its full sequence is Isopentenyl-diphosphate delta-isomerase (349 aa).

6–7 contributes to the substrate binding site; the sequence is RK. Residues 62–64, S93, and N122 each bind FMN; that span reads AMT. Q152 lines the substrate pocket. Residue E153 coordinates Mg(2+). FMN-binding positions include K184, T214, 258 to 259, and 280 to 281; these read GG and AG.

Belongs to the IPP isomerase type 2 family. Homooctamer. Dimer of tetramers. The cofactor is FMN. NADPH serves as cofactor. It depends on Mg(2+) as a cofactor.

It is found in the cytoplasm. It carries out the reaction isopentenyl diphosphate = dimethylallyl diphosphate. Involved in the biosynthesis of isoprenoids. Catalyzes the 1,3-allylic rearrangement of the homoallylic substrate isopentenyl (IPP) to its allylic isomer, dimethylallyl diphosphate (DMAPP). In Bacillus cereus (strain 03BB102), this protein is Isopentenyl-diphosphate delta-isomerase.